The primary structure comprises 103 residues: Cytochrome c-552 (103 aa).

The signal sequence occupies residues 1-22; that stretch reads MKTAWLGTFAASALLVAGYAQA. Heme c contacts are provided by Cys-32, Cys-35, His-36, and Met-81.

As to quaternary structure, monomer. In terms of processing, binds 1 heme c group covalently per subunit.

It is found in the periplasm. Its function is as follows. Monoheme c-type cytochrome. Probable electron donor to membrane cytochrome oxidase and to periplasmic nitrite reductase. This Nitrosomonas europaea (strain ATCC 19718 / CIP 103999 / KCTC 2705 / NBRC 14298) protein is Cytochrome c-552 (cyt).